A 472-amino-acid polypeptide reads, in one-letter code: MNMPQSLGNQPLPPEPPSLGTPAEGPGTTSPPEHCWPVRPTLRNELDTFSVHFYIFFGPSVALPPERPAVFAMRLLPVLDSGGVLSLELQLNASSVRQENVTVFGCLTHEVPLSLGDAAVTCSKESLAGFLLSVSATTRVARLRIPFPQTGTWFLALRSLCGVGPRFVRCRNATAEVRMRTFLSPCVDDCGPYGQCKLLRTHNYLYAACECKAGWRGWGCTDSADALTYGFQLLSTLLLCLSNLMFLPPVVLAIRSRYVLEAAVYTFTMFFSTFYHACDQPGIVVFCIMDYDVLQFCDFLGSLMSVWVTVIAMARLQPVVKQVLYLLGAMLLSMALQLDRHGLWNLLGPSLFALGILATAWTVRSVRRRHCYPPTWRRWLFYLCPGSLIAGSAVLLYAFVETRDNYFYIHSIWHMLIAGSVGFLLPPRAKTDHGVPSGARARGCGYQLCINEQEELGLVGPGGATVSSICAS.

A disordered region spans residues 1–36 (MNMPQSLGNQPLPPEPPSLGTPAEGPGTTSPPEHCW). Topologically, residues 1-233 (MNMPQSLGNQ…ADALTYGFQL (233 aa)) are extracellular. N-linked (GlcNAc...) asparagine glycosylation is found at N92 and N100. Residues 182 to 221 (FLSPCVDDCGPYGQCKLLRTHNYLYAACECKAGWRGWGCT) enclose the EGF-like domain. Intrachain disulfides connect C186–C196, C190–C209, and C211–C220. Residues 234–254 (LSTLLLCLSNLMFLPPVVLAI) traverse the membrane as a helical segment. The Cytoplasmic segment spans residues 255–257 (RSR). Residues 258–277 (YVLEAAVYTFTMFFSTFYHA) form a helical membrane-spanning segment. Over 278–292 (CDQPGIVVFCIMDYD) the chain is Extracellular. Residues 293 to 313 (VLQFCDFLGSLMSVWVTVIAM) form a helical membrane-spanning segment. Topologically, residues 314–315 (AR) are cytoplasmic. The chain crosses the membrane as a helical span at residues 316–336 (LQPVVKQVLYLLGAMLLSMAL). Topologically, residues 337–342 (QLDRHG) are extracellular. A helical transmembrane segment spans residues 343–363 (LWNLLGPSLFALGILATAWTV). Residues 364 to 379 (RSVRRRHCYPPTWRRW) are Cytoplasmic-facing. The helical transmembrane segment at 380 to 400 (LFYLCPGSLIAGSAVLLYAFV) threads the bilayer. Over 401-405 (ETRDN) the chain is Extracellular. A helical transmembrane segment spans residues 406-426 (YFYIHSIWHMLIAGSVGFLLP). Over 427–472 (PRAKTDHGVPSGARARGCGYQLCINEQEELGLVGPGGATVSSICAS) the chain is Cytoplasmic.

This sequence belongs to the TMEM8 family. Isoform 2 (via its cytoplasmic part) interacts with EZR. In terms of processing, isoform 2 is N-glycosylated.

The protein localises to the cell membrane. The protein resides in the cytoplasm. It localises to the nucleus. Its subcellular location is the mitochondrion. It is found in the endoplasmic reticulum. Its function is as follows. May function as a regulator of the EGFR pathway. Probable tumor suppressor which may function in cell growth, proliferation and adhesion. The chain is Transmembrane protein 8B (TMEM8B) from Homo sapiens (Human).